We begin with the raw amino-acid sequence, 301 residues long: GTPase Era (301 aa).

The Era-type G domain occupies 7–175 (YCGFIAIVGR…AAIVRKHLPE (169 aa)). The G1 stretch occupies residues 15–22 (GRPNVGKS). 15 to 22 (GRPNVGKS) contacts GTP. Positions 41 to 45 (QTTRH) are G2. The segment at 62 to 65 (DTPG) is G3. GTP is bound by residues 62–66 (DTPGL) and 124–127 (NKVD). The G4 stretch occupies residues 124-127 (NKVD). The tract at residues 154-156 (ISA) is G5. The KH type-2 domain occupies 206–283 (LGAELPYSVT…HLELWVKVKS (78 aa)).

It belongs to the TRAFAC class TrmE-Era-EngA-EngB-Septin-like GTPase superfamily. Era GTPase family. In terms of assembly, monomer.

Its subcellular location is the cytoplasm. The protein localises to the cell inner membrane. An essential GTPase that binds both GDP and GTP, with rapid nucleotide exchange. Plays a role in 16S rRNA processing and 30S ribosomal subunit biogenesis and possibly also in cell cycle regulation and energy metabolism. The chain is GTPase Era from Shigella dysenteriae serotype 1 (strain Sd197).